The primary structure comprises 929 residues: SCY1-like protein 2 (929 aa).

The Protein kinase domain occupies 32 to 327 (FDVGRHIASG…ADQMTKIPFF (296 aa)). The stretch at 443 to 479 (DEIKNSVLPMVYRALEAPSIQIQELCLNIIPTFANLI) is one HEAT repeat. A coiled-coil region spans residues 661-701 (ESENKEDGLQNKHKRASLTLEEKQKLAKEQEQAQKLKSQQP). Residue Ser-677 is modified to Phosphoserine. Residues 684–694 (QKLAKEQEQAQ) show a composition bias toward basic and acidic residues. Disordered stretches follow at residues 684-709 (QKLA…VHTP) and 906-929 (NFAQ…DLFG). Residues 695–705 (KLKSQQPLKPQ) are compositionally biased toward low complexity. Residues 699 to 929 (QQPLKPQVHT…ASNDLKDLFG (231 aa)) are necessary for interaction with AP2 complex and clathrin, interaction with clathrin is necessary for its targeting to the TGN and endosomal membranes. Residue Thr-708 is modified to Phosphothreonine. A compositionally biased stretch (polar residues) spans 912 to 922 (TTMTNSSSASN).

The protein belongs to the protein kinase superfamily. As to quaternary structure, interacts with clathrin and AP2B1; the interaction mediates the association with the AP-2 complex. Post-translationally, could autophosphorylate in presence of poly-L-lysine.

The protein resides in the cytoplasmic vesicle. Its subcellular location is the clathrin-coated vesicle. The protein localises to the golgi apparatus. It localises to the trans-Golgi network membrane. It is found in the endosome membrane. Component of the AP2-containing clathrin coat that may regulate clathrin-dependent trafficking at plasma membrane, TGN and endosomal system. A possible serine/threonine-protein kinase toward the beta2-subunit of the plasma membrane adapter complex AP2 and other proteins in presence of poly-L-lysine has not been confirmed. By regulating the expression of excitatory receptors at synapses, plays an essential role in neuronal function and signaling and in brain development. The polypeptide is SCY1-like protein 2 (Homo sapiens (Human)).